The chain runs to 268 residues: Mediator of RNA polymerase II transcription subunit 8 (268 aa).

Residues Met1–Ser28 adopt a coiled-coil conformation. Ser82 is subject to Phosphoserine. A coiled-coil region spans residues Ala133–Ser163. The segment at Ser142 to Leu151 is interaction with the Elongin BC complex. Disordered stretches follow at residues Lys156–Thr176 and Asn193–Arg268. Positions Ser200–Gly209 are enriched in gly residues. Positions Ser218–Met235 are enriched in polar residues.

It belongs to the Mediator complex subunit 8 family. Component of the Mediator complex, which is composed of MED1, MED4, MED6, MED7, MED8, MED9, MED10, MED11, MED12, MED13, MED13L, MED14, MED15, MED16, MED17, MED18, MED19, MED20, MED21, MED22, MED23, MED24, MED25, MED26, MED27, MED29, MED30, MED31, CCNC, CDK8 and CDC2L6/CDK11. The MED12, MED13, CCNC and CDK8 subunits form a distinct module termed the CDK8 module. Mediator containing the CDK8 module is less active than Mediator lacking this module in supporting transcriptional activation. Individual preparations of the Mediator complex lacking one or more distinct subunits have been variously termed ARC, CRSP, DRIP, PC2, SMCC and TRAP. May be part of a multisubunit E3 ubiquitin-protein ligase complex with the elongin BC complex (ELOB and ELOC), CUL2 and RBX1.

The protein resides in the nucleus. Its pathway is protein modification; protein ubiquitination. Component of the Mediator complex, a coactivator involved in the regulated transcription of nearly all RNA polymerase II-dependent genes. Mediator functions as a bridge to convey information from gene-specific regulatory proteins to the basal RNA polymerase II transcription machinery. Mediator is recruited to promoters by direct interactions with regulatory proteins and serves as a scaffold for the assembly of a functional preinitiation complex with RNA polymerase II and the general transcription factors. May play a role as a target recruitment subunit in E3 ubiquitin-protein ligase complexes and thus in ubiquitination and subsequent proteasomal degradation of target proteins. In Homo sapiens (Human), this protein is Mediator of RNA polymerase II transcription subunit 8 (MED8).